The following is a 225-amino-acid chain: uncharacterized protein (225 aa).

Positions proline 32–alanine 82 are disordered. 2 stretches are compositionally biased toward basic and acidic residues: residues lysine 37–alanine 60 and glutamine 69–serine 79.

The protein belongs to the MG067/MG068/MG395 family.

This is an uncharacterized protein from Mycoplasma pneumoniae (strain ATCC 29342 / M129 / Subtype 1) (Mycoplasmoides pneumoniae).